The primary structure comprises 186 residues: Negative modulator of initiation of replication (186 aa).

Belongs to the SeqA family. Homodimer. Polymerizes to form helical filaments.

The protein resides in the cytoplasm. Negative regulator of replication initiation, which contributes to regulation of DNA replication and ensures that replication initiation occurs exactly once per chromosome per cell cycle. Binds to pairs of hemimethylated GATC sequences in the oriC region, thus preventing assembly of replication proteins and re-initiation at newly replicated origins. Repression is relieved when the region becomes fully methylated. This chain is Negative modulator of initiation of replication, found in Haemophilus ducreyi (strain 35000HP / ATCC 700724).